We begin with the raw amino-acid sequence, 489 residues long: MKYVCLRSFIKILEKHKKIKRIFVPISPNLEITEISHRTINKEGPALIFENPKGYKMPLLCNLFGTTERVAMAMGGKDIKYIRKLGKIISFLKTPEAPKNIKDILNIAPKFKAMLHMFTKKVNNAPCQEEIFSGSDVDLTSIPIMKCWPNDIGPLITWGLTITKGPYKKRQNIGVYRQQVIEKNKIIMRWLPHRGGALDFLSWKNSKKAYEDKFPVAIALGADPATILSAVTPIPDNLSEYSFAGLLRKNKTEVIKCISSDLEVPAYSEIILEGYLDDKIAEEGPYGDHTGYYNEIERFPILNITHITKRKDSLYHSTYTGKPIDEPSVIGMALNELFIPILQKQFPEIIDFYLPPECCSYRISVVSIKKQYLGHANQIMMGIWSILRQFMYTKFIIVCDDDIDIRNWKDIMWSISTRVDPYRDTLLIKNTPIDYLDFASEKKNLGSKIGIDATNKWPGETTRNWGVPIKMDKIIKDKIDLIWDDLNIF.

Residue Asn-172 participates in Mn(2+) binding. Prenylated FMN is bound by residues 175-177 (VYR), 189-191 (RWL), and 194-195 (RG). Glu-240 contributes to the Mn(2+) binding site. The Proton donor role is filled by Asp-288.

The protein belongs to the UbiD family. As to quaternary structure, homohexamer. It depends on prenylated FMN as a cofactor. Requires Mn(2+) as cofactor.

It is found in the cell membrane. The catalysed reaction is a 4-hydroxy-3-(all-trans-polyprenyl)benzoate + H(+) = a 2-(all-trans-polyprenyl)phenol + CO2. The protein operates within cofactor biosynthesis; ubiquinone biosynthesis. In terms of biological role, catalyzes the decarboxylation of 3-octaprenyl-4-hydroxy benzoate to 2-octaprenylphenol, an intermediate step in ubiquinone biosynthesis. This is 3-octaprenyl-4-hydroxybenzoate carboxy-lyase from Wigglesworthia glossinidia brevipalpis.